A 112-amino-acid chain; its full sequence is U-scoloptoxin(16)-Er5a (112 aa).

The first 26 residues, 1–26, serve as a signal peptide directing secretion; it reads MNTVSVVQFLAVGCAVFVLYGRGVFA.

Belongs to the scoloptoxin-16 family. Contains 2 disulfide bonds. As to expression, expressed by the venom gland.

Its subcellular location is the secreted. The sequence is that of U-scoloptoxin(16)-Er5a from Ethmostigmus rubripes (Giant centipede).